The primary structure comprises 180 residues: Der GTPase-activating protein YihI (180 aa).

Disordered regions lie at residues 1–90 (MSRK…QERR) and 145–180 (EPEE…DYKG). The span at 23-32 (NRTESDVEGR) shows a compositional bias: basic and acidic residues. The segment covering 33 to 43 (LRKRAKKRKGL) has biased composition (basic residues). 2 stretches are compositionally biased toward basic and acidic residues: residues 50-68 (SDAE…DPRL) and 80-90 (PVKKQTKQERR). The segment covering 165–180 (DLLADFDDINFDDYKG) has biased composition (acidic residues).

The protein belongs to the YihI family. As to quaternary structure, interacts with Der.

In terms of biological role, a GTPase-activating protein (GAP) that modifies Der/EngA GTPase function. May play a role in ribosome biogenesis. In Vibrio campbellii (strain ATCC BAA-1116), this protein is Der GTPase-activating protein YihI.